A 1839-amino-acid polypeptide reads, in one-letter code: Nuclear pore complex protein DDB_G0274915 (1839 aa).

Composition is skewed to polar residues over residues 1 to 27 (MNGR…NTIN) and 35 to 54 (NGSL…QTNK). Disordered regions lie at residues 1 to 54 (MNGR…QTNK), 78 to 150 (DESS…ISDD), 325 to 367 (KQFD…PNAD), 480 to 568 (PLNK…FSTT), 589 to 636 (TTIA…GGGV), 657 to 705 (VSTS…DVPG), 739 to 810 (TTTT…DSKT), 818 to 837 (PTTE…SSLF), 846 to 1106 (TTPS…FSSN), and 1129 to 1839 (TTAT…AKKK). Low complexity predominate over residues 80–90 (SSSSSSSSSSS). Polar residues predominate over residues 91 to 101 (YDDGNNIPQKG). Composition is skewed to low complexity over residues 102–148 (SSTT…INIS) and 329–343 (DNNN…SIYN). Positions 344 to 354 (RQSIYSPNSKI) are enriched in polar residues. Low complexity-rich tracts occupy residues 495-568 (TYAT…FSTT) and 589-607 (TTIA…SSSS). The span at 616–628 (MFTSDSNKSNLFS) shows a compositional bias: polar residues. 2 stretches are compositionally biased toward low complexity: residues 658-671 (STST…SKSS) and 739-760 (TTTT…TTDK). The span at 761 to 773 (SSADKSSADKSST) shows a compositional bias: basic and acidic residues. 3 stretches are compositionally biased toward low complexity: residues 774 to 803 (DKST…TTTT), 827 to 837 (PTTSLTSSSLF), and 846 to 871 (TTPS…NTTT). 2 stretches are compositionally biased toward acidic residues: residues 896–923 (ESDE…EAEE) and 944–958 (LEAE…DSDE). 2 stretches are compositionally biased toward low complexity: residues 1005–1021 (GSSL…SFLT) and 1046–1060 (SSSS…IPTT). Basic and acidic residues predominate over residues 1061–1070 (SKKEKIDDKP). The segment covering 1071–1092 (STTTTTTTTSLFGSTTTSGLFS) has biased composition (low complexity). The segment covering 1093-1106 (NPSTTSTGSLFSSN) has biased composition (polar residues). Composition is skewed to low complexity over residues 1129–1242 (TTAT…FGST) and 1250–1292 (ATTT…GLFG). Residues 1293–1310 (ASSSTTPSTGLFGSATTP) show a composition bias toward polar residues. 2 stretches are compositionally biased toward low complexity: residues 1311–1384 (STGL…TTPP) and 1397–1498 (LFGT…TTAT). The segment covering 1507–1521 (TAPSTGLFGSTTATN) has biased composition (polar residues). The segment covering 1522 to 1673 (PSTGLFGSTT…SSTPFGASPF (152 aa)) has biased composition (low complexity). The span at 1676 to 1708 (PTSTSSPPFGAPTSASSTPFGAPQISTSSSTNL) shows a compositional bias: polar residues. A compositionally biased stretch (low complexity) spans 1712-1810 (ASSSTAAPSF…PFGSTPSTAP (99 aa)).

The polypeptide is Nuclear pore complex protein DDB_G0274915 (Dictyostelium discoideum (Social amoeba)).